Reading from the N-terminus, the 760-residue chain is 5-methyltetrahydropteroyltriglutamate--homocysteine methyltransferase (760 aa).

5-methyltetrahydropteroyltri-L-glutamate-binding positions include 24 to 27 and K118; that span reads RELK. Residues 437–439 and E490 each bind L-homocysteine; that span reads IGS. Residues 437-439 and E490 contribute to the L-methionine site; that span reads IGS. Residues 521–522 and W567 each bind 5-methyltetrahydropteroyltri-L-glutamate; that span reads RC. An L-homocysteine-binding site is contributed by D605. An L-methionine-binding site is contributed by D605. E611 contacts 5-methyltetrahydropteroyltri-L-glutamate. Zn(2+)-binding residues include H647, C649, and E671. Residue H700 is the Proton donor of the active site. C732 contacts Zn(2+).

Belongs to the vitamin-B12 independent methionine synthase family. It depends on Zn(2+) as a cofactor.

It carries out the reaction 5-methyltetrahydropteroyltri-L-glutamate + L-homocysteine = tetrahydropteroyltri-L-glutamate + L-methionine. It participates in amino-acid biosynthesis; L-methionine biosynthesis via de novo pathway; L-methionine from L-homocysteine (MetE route): step 1/1. In terms of biological role, catalyzes the transfer of a methyl group from 5-methyltetrahydrofolate to homocysteine resulting in methionine formation. The polypeptide is 5-methyltetrahydropteroyltriglutamate--homocysteine methyltransferase (Mycobacterium leprae (strain TN)).